Reading from the N-terminus, the 956-residue chain is Zinc finger CCHC domain-containing protein 14 (956 aa).

Disordered stretches follow at residues 25-50, 78-99, 206-229, 243-276, 361-464, 485-505, 543-583, and 750-786; these read SSLN…PSGA, ALHT…GKHG, SSSS…KVGA, GIPS…GTGS, KEKS…EKEK, PVQN…PQLM, LEER…QGLS, and FYSG…PQPA. Over residues 29–43 the composition is skewed to gly residues; sequence SGGGGGGGGGGGGKS. Composition is skewed to low complexity over residues 206 to 225 and 246 to 265; these read SSSS…PSLP and SSQS…SASL. The segment covering 369 to 389 has biased composition (polar residues); that stretch reads LNSSAPSLVTSSGVARVTPTS. A compositionally biased stretch (low complexity) spans 423-432; sequence SSEYSSSSSS. Residues 438–464 show a composition bias toward basic and acidic residues; that stretch reads VREESSDSAEESDRRVDIHVEGTEKEK. A compositionally biased stretch (low complexity) spans 750-768; that stretch reads FYSGGAGSSSPGNIPASSQ. The segment at 913 to 930 adopts a CCHC-type zinc-finger fold; sequence LSCYNCGATGHRAQDCKQ.

This Mus musculus (Mouse) protein is Zinc finger CCHC domain-containing protein 14 (Zcchc14).